The sequence spans 175 residues: Translation initiation factor IF-3 (175 aa).

The protein belongs to the IF-3 family. In terms of assembly, monomer.

Its subcellular location is the cytoplasm. Functionally, IF-3 binds to the 30S ribosomal subunit and shifts the equilibrium between 70S ribosomes and their 50S and 30S subunits in favor of the free subunits, thus enhancing the availability of 30S subunits on which protein synthesis initiation begins. The sequence is that of Translation initiation factor IF-3 from Blochmanniella floridana.